A 558-amino-acid polypeptide reads, in one-letter code: Proline--tRNA ligase (558 aa).

The protein belongs to the class-II aminoacyl-tRNA synthetase family. ProS type 1 subfamily. As to quaternary structure, homodimer.

The protein localises to the cytoplasm. The enzyme catalyses tRNA(Pro) + L-proline + ATP = L-prolyl-tRNA(Pro) + AMP + diphosphate. Functionally, catalyzes the attachment of proline to tRNA(Pro) in a two-step reaction: proline is first activated by ATP to form Pro-AMP and then transferred to the acceptor end of tRNA(Pro). As ProRS can inadvertently accommodate and process non-cognate amino acids such as alanine and cysteine, to avoid such errors it has two additional distinct editing activities against alanine. One activity is designated as 'pretransfer' editing and involves the tRNA(Pro)-independent hydrolysis of activated Ala-AMP. The other activity is designated 'posttransfer' editing and involves deacylation of mischarged Ala-tRNA(Pro). The misacylated Cys-tRNA(Pro) is not edited by ProRS. The polypeptide is Proline--tRNA ligase (Coprothermobacter proteolyticus (strain ATCC 35245 / DSM 5265 / OCM 4 / BT)).